Consider the following 318-residue polypeptide: Transaldolase (318 aa).

Lysine 132 serves as the catalytic Schiff-base intermediate with substrate.

It belongs to the transaldolase family. Type 1 subfamily. Homodimer.

Its subcellular location is the cytoplasm. It catalyses the reaction D-sedoheptulose 7-phosphate + D-glyceraldehyde 3-phosphate = D-erythrose 4-phosphate + beta-D-fructose 6-phosphate. Its pathway is carbohydrate degradation; pentose phosphate pathway; D-glyceraldehyde 3-phosphate and beta-D-fructose 6-phosphate from D-ribose 5-phosphate and D-xylulose 5-phosphate (non-oxidative stage): step 2/3. In terms of biological role, transaldolase is important for the balance of metabolites in the pentose-phosphate pathway. The chain is Transaldolase from Shewanella sp. (strain ANA-3).